A 133-amino-acid polypeptide reads, in one-letter code: Glycine cleavage system H protein (133 aa).

Positions 24 to 106 (IATIGISAYA…YGDGWLLKVR (83 aa)) constitute a Lipoyl-binding domain. At K65 the chain carries N6-lipoyllysine.

It belongs to the GcvH family. As to quaternary structure, the glycine cleavage system is composed of four proteins: P, T, L and H. The cofactor is (R)-lipoate.

The glycine cleavage system catalyzes the degradation of glycine. The H protein shuttles the methylamine group of glycine from the P protein to the T protein. The polypeptide is Glycine cleavage system H protein (Crocosphaera subtropica (strain ATCC 51142 / BH68) (Cyanothece sp. (strain ATCC 51142))).